Consider the following 102-residue polypeptide: Small ribosomal subunit protein uS10 (102 aa).

It belongs to the universal ribosomal protein uS10 family. In terms of assembly, part of the 30S ribosomal subunit.

Its function is as follows. Involved in the binding of tRNA to the ribosomes. This is Small ribosomal subunit protein uS10 from Lacticaseibacillus casei (strain BL23) (Lactobacillus casei).